The chain runs to 734 residues: Protein SKG6 (734 aa).

Residues 30 to 68 (TRRDDSDSSSSSASSTKNSKSAECTGSKQQCQLPTDSSH) are disordered. Over residues 37-51 (SSSSSASSTKNSKSA) the composition is skewed to low complexity. A compositionally biased stretch (polar residues) spans 53 to 68 (CTGSKQQCQLPTDSSH). A helical membrane pass occupies residues 72 to 96 (VTVGVAVAVPVGVIIIVLAVILCIV). Position 137 is a phosphoserine (Ser-137). Residue Thr-169 is modified to Phosphothreonine. Residues Ser-191, Ser-193, and Ser-219 each carry the phosphoserine modification. Thr-221 is modified (phosphothreonine). Ser-222 and Ser-251 each carry phosphoserine. The interval 239–327 (RFQESESFRS…LRFGKDDDNY (89 aa)) is disordered. A compositionally biased stretch (polar residues) spans 253–273 (IHNNQLSRGSATEGANKQFTF). Residues 280 to 299 (SSSVSEEAEVLNESNESASN) are compositionally biased toward low complexity. Residues 309 to 327 (SSEKTHERNLRFGKDDDNY) show a composition bias toward basic and acidic residues. Phosphoserine is present on Ser-369. Residues 647-671 (DLTAKPSYKPAGSFRSVSATNSRNN) form a disordered region. A compositionally biased stretch (polar residues) spans 661-671 (RSVSATNSRNN). A phosphoserine mark is found at Ser-672 and Ser-717. Residues 707–734 (SVGGILPHSGSQDDLRKQLGSSHNYTVN) are disordered. A compositionally biased stretch (polar residues) spans 725 to 734 (LGSSHNYTVN).

This sequence belongs to the SKG6/TOS2 family. As to quaternary structure, interacts with ZDS1 and ZDS2. Phosphorylated by CDC28.

The protein localises to the membrane. Its function is as follows. May be involved in the polarity establishment process. Suppresses the lethality of KEX2-GAS1 double null mutant when overexpressed. The chain is Protein SKG6 (SKG6) from Saccharomyces cerevisiae (strain ATCC 204508 / S288c) (Baker's yeast).